We begin with the raw amino-acid sequence, 416 residues long: UDP-N-acetylglucosamine 1-carboxyvinyltransferase (416 aa).

Position 22–23 (22–23) interacts with phosphoenolpyruvate; it reads KN. R91 contacts UDP-N-acetyl-alpha-D-glucosamine. Residue C115 is the Proton donor of the active site. A 2-(S-cysteinyl)pyruvic acid O-phosphothioketal modification is found at C115. UDP-N-acetyl-alpha-D-glucosamine contacts are provided by residues 120-124, D303, and I325; that span reads RPVDL.

Belongs to the EPSP synthase family. MurA subfamily.

The protein resides in the cytoplasm. It catalyses the reaction phosphoenolpyruvate + UDP-N-acetyl-alpha-D-glucosamine = UDP-N-acetyl-3-O-(1-carboxyvinyl)-alpha-D-glucosamine + phosphate. Its pathway is cell wall biogenesis; peptidoglycan biosynthesis. Functionally, cell wall formation. Adds enolpyruvyl to UDP-N-acetylglucosamine. This chain is UDP-N-acetylglucosamine 1-carboxyvinyltransferase, found in Oleidesulfovibrio alaskensis (strain ATCC BAA-1058 / DSM 17464 / G20) (Desulfovibrio alaskensis).